Consider the following 320-residue polypeptide: ATP-dependent 6-phosphofructokinase (320 aa).

Position 12 (G12) interacts with ATP. ADP is bound by residues 22–26 (RGVVR) and 55–60 (RYSVSD). ATP-binding positions include 73–74 (RF) and 103–106 (GDGS). Position 104 (D104) interacts with Mg(2+). A substrate-binding site is contributed by 126–128 (TID). The Proton acceptor role is filled by D128. R155 is a binding site for ADP. Residues R163 and 170–172 (MGR) each bind substrate. ADP-binding positions include 186-188 (GCE), K212, and 214-216 (KKH). Substrate-binding positions include E223, R244, and 250–253 (HIQR).

Belongs to the phosphofructokinase type A (PFKA) family. ATP-dependent PFK group I subfamily. Prokaryotic clade 'B1' sub-subfamily. In terms of assembly, homotetramer. The cofactor is Mg(2+).

Its subcellular location is the cytoplasm. It catalyses the reaction beta-D-fructose 6-phosphate + ATP = beta-D-fructose 1,6-bisphosphate + ADP + H(+). It functions in the pathway carbohydrate degradation; glycolysis; D-glyceraldehyde 3-phosphate and glycerone phosphate from D-glucose: step 3/4. With respect to regulation, allosterically activated by ADP and other diphosphonucleosides, and allosterically inhibited by phosphoenolpyruvate. Catalyzes the phosphorylation of D-fructose 6-phosphate to fructose 1,6-bisphosphate by ATP, the first committing step of glycolysis. In Cronobacter sakazakii (strain ATCC BAA-894) (Enterobacter sakazakii), this protein is ATP-dependent 6-phosphofructokinase.